The primary structure comprises 319 residues: D-alanine--D-alanine ligase (319 aa).

The ATP-grasp domain maps to 120–315 (KRVLAQAGVP…YPELLRRLVE (196 aa)). 147–198 (DPPFFVKPANTGSSVGISRVERFQDLEAALALAFRYDEKAVVEKALSPVREL) is a binding site for ATP. 3 residues coordinate Mg(2+): Asp-270, Glu-282, and Asn-284.

Belongs to the D-alanine--D-alanine ligase family. Mg(2+) serves as cofactor. Mn(2+) is required as a cofactor.

The protein localises to the cytoplasm. The enzyme catalyses 2 D-alanine + ATP = D-alanyl-D-alanine + ADP + phosphate + H(+). It participates in cell wall biogenesis; peptidoglycan biosynthesis. In terms of biological role, cell wall formation. The chain is D-alanine--D-alanine ligase from Thermus thermophilus (strain ATCC 27634 / DSM 579 / HB8).